The chain runs to 348 residues: Glycerol-1-phosphate dehydrogenase [NAD(P)+] (348 aa).

NAD(+) is bound by residues 94–98 (GKVID) and Thr116. Position 121 (Asp121) interacts with substrate. Ser125 provides a ligand contact to NAD(+). Position 168 (Asp168) interacts with substrate. Asp168 and His248 together coordinate Zn(2+). His252 contributes to the substrate binding site. His264 is a Zn(2+) binding site.

This sequence belongs to the glycerol-1-phosphate dehydrogenase family. In terms of assembly, homooctamer. It depends on Zn(2+) as a cofactor.

Its subcellular location is the cytoplasm. The enzyme catalyses sn-glycerol 1-phosphate + NAD(+) = dihydroxyacetone phosphate + NADH + H(+). It carries out the reaction sn-glycerol 1-phosphate + NADP(+) = dihydroxyacetone phosphate + NADPH + H(+). It participates in membrane lipid metabolism; glycerophospholipid metabolism. Catalyzes the NAD(P)H-dependent reduction of dihydroxyacetonephosphate (DHAP or glycerone phosphate) to glycerol 1-phosphate (G1P). The G1P thus generated is used as the glycerophosphate backbone of phospholipids in the cellular membranes of Archaea. The chain is Glycerol-1-phosphate dehydrogenase [NAD(P)+] from Methanosphaera stadtmanae (strain ATCC 43021 / DSM 3091 / JCM 11832 / MCB-3).